The following is a 59-amino-acid chain: Large ribosomal subunit protein bL32 (59 aa).

A compositionally biased stretch (basic residues) spans 1–22 (MAVPKKKTSNSKRDSRRAHWNR). The segment at 1–59 (MAVPKKKTSNSKRDSRRAHWNRKANLAAQRALSTGKSILTGRAKGFEYPTKDDDEDDDE) is disordered.

Belongs to the bacterial ribosomal protein bL32 family.

This is Large ribosomal subunit protein bL32 from Acaryochloris marina (strain MBIC 11017).